The chain runs to 282 residues: 2-dehydro-3-deoxyphosphooctonate aldolase (282 aa).

The protein belongs to the KdsA family.

It is found in the cytoplasm. The enzyme catalyses D-arabinose 5-phosphate + phosphoenolpyruvate + H2O = 3-deoxy-alpha-D-manno-2-octulosonate-8-phosphate + phosphate. It functions in the pathway carbohydrate biosynthesis; 3-deoxy-D-manno-octulosonate biosynthesis; 3-deoxy-D-manno-octulosonate from D-ribulose 5-phosphate: step 2/3. It participates in bacterial outer membrane biogenesis; lipopolysaccharide biosynthesis. This is 2-dehydro-3-deoxyphosphooctonate aldolase from Bartonella bacilliformis (strain ATCC 35685 / KC583 / Herrer 020/F12,63).